Reading from the N-terminus, the 320-residue chain is tRNA dimethylallyltransferase (320 aa).

Residue 5–12 (GPTAVGKS) coordinates ATP. 7 to 12 (TAVGKS) provides a ligand contact to substrate. Residues 30–33 (DSMQ) form an interaction with substrate tRNA region.

This sequence belongs to the IPP transferase family. In terms of assembly, monomer. Mg(2+) is required as a cofactor.

The enzyme catalyses adenosine(37) in tRNA + dimethylallyl diphosphate = N(6)-dimethylallyladenosine(37) in tRNA + diphosphate. Catalyzes the transfer of a dimethylallyl group onto the adenine at position 37 in tRNAs that read codons beginning with uridine, leading to the formation of N6-(dimethylallyl)adenosine (i(6)A). The polypeptide is tRNA dimethylallyltransferase (Heliobacterium modesticaldum (strain ATCC 51547 / Ice1)).